Reading from the N-terminus, the 262-residue chain is Phycoerythrobilin:ferredoxin oxidoreductase (262 aa).

The protein belongs to the HY2 family.

It carries out the reaction (3Z)-phycoerythrobilin + oxidized 2[4Fe-4S]-[ferredoxin] = 15,16-dihydrobiliverdin + reduced 2[4Fe-4S]-[ferredoxin] + 2 H(+). Catalyzes the two-electron reduction of the C2 and C3(1) diene system of 15,16-dihydrobiliverdin. In Parasynechococcus marenigrum (strain WH8102), this protein is Phycoerythrobilin:ferredoxin oxidoreductase (pebB).